A 428-amino-acid chain; its full sequence is Elongation factor 1-alpha (428 aa).

Residues 5-217 (KPHVNIVFIG…DQIPEPEKPV (213 aa)) enclose the tr-type G domain. Positions 14–21 (GHVDHGKS) are G1. 14 to 21 (GHVDHGKS) is a GTP binding site. Serine 21 contributes to the Mg(2+) binding site. Residues 68–72 (GITID) form a G2 region. A G3 region spans residues 89–92 (DAPG). GTP contacts are provided by residues 89 to 93 (DAPGH) and 144 to 147 (NKMD). The segment at 144-147 (NKMD) is G4. Residues 181-183 (SAW) form a G5 region.

The protein belongs to the TRAFAC class translation factor GTPase superfamily. Classic translation factor GTPase family. EF-Tu/EF-1A subfamily.

Its subcellular location is the cytoplasm. It carries out the reaction GTP + H2O = GDP + phosphate + H(+). Its function is as follows. GTP hydrolase that promotes the GTP-dependent binding of aminoacyl-tRNA to the A-site of ribosomes during protein biosynthesis. This is Elongation factor 1-alpha from Pyrococcus abyssi (strain GE5 / Orsay).